Reading from the N-terminus, the 320-residue chain is Cytochrome f (320 aa).

An N-terminal signal peptide occupies residues 1 to 35 (MQTRKTFSWIKEEITRSISVLLMIYIITWASISNA). Heme is bound by residues Tyr-36, Cys-56, Cys-59, and His-60. The chain crosses the membrane as a helical span at residues 286 to 306 (VQGLLFFLASVILAQIFLVLK).

Belongs to the cytochrome f family. In terms of assembly, the 4 large subunits of the cytochrome b6-f complex are cytochrome b6, subunit IV (17 kDa polypeptide, petD), cytochrome f and the Rieske protein, while the 4 small subunits are PetG, PetL, PetM and PetN. The complex functions as a dimer. Heme serves as cofactor.

It localises to the plastid. The protein localises to the chloroplast thylakoid membrane. Functionally, component of the cytochrome b6-f complex, which mediates electron transfer between photosystem II (PSII) and photosystem I (PSI), cyclic electron flow around PSI, and state transitions. This chain is Cytochrome f, found in Manihot esculenta (Cassava).